The chain runs to 429 residues: Histidine--tRNA ligase (429 aa).

Belongs to the class-II aminoacyl-tRNA synthetase family. In terms of assembly, homodimer.

It is found in the cytoplasm. The enzyme catalyses tRNA(His) + L-histidine + ATP = L-histidyl-tRNA(His) + AMP + diphosphate + H(+). The chain is Histidine--tRNA ligase from Cyanothece sp. (strain PCC 7425 / ATCC 29141).